A 655-amino-acid polypeptide reads, in one-letter code: RalA-binding protein 1 (655 aa).

A disordered region spans residues 1–158 (MTECFLPPTS…KKSKDLTAAD (158 aa)). N-acetylthreonine is present on threonine 2. Polar residues predominate over residues 24 to 33 (LTRTPSSEEI). A phosphoserine mark is found at serine 29, serine 30, and serine 34. The residue at position 44 (threonine 44) is a Phosphothreonine. Phosphoserine occurs at positions 48 and 62. Residues 52 to 68 (DILHEPPDVVSDDEKDH) show a composition bias toward basic and acidic residues. 69-74 (GKKKGK) lines the ATP pocket. Over residues 69–79 (GKKKGKFKKKE) the composition is skewed to basic residues. 2 positions are modified to phosphoserine: serine 92 and serine 93. Residues 102-118 (KMKRSKGIHVFKKPSFS) show a composition bias toward basic residues. Positions 102 to 119 (KMKRSKGIHVFKKPSFSK) are nuclear localization signal. The span at 119–155 (KKKEKDFKIKEKPKEEKHKEEKHKEEKHKEKKSKDLT) shows a compositional bias: basic and acidic residues. The interval 154–219 (LTAADVVKQW…PAVFRECIDY (66 aa)) is mediates association with membranes and could form transmembrane domains. The Rho-GAP domain maps to 192-380 (IPLADAVERT…VVLKQVMKPL (189 aa)). A mediates interaction with RALA and RALB region spans residues 403 to 499 (RRQEFLLNCL…LTEQEELLAM (97 aa)). 418-425 (GGIKDLSK) contacts ATP. Serine 461 and serine 463 each carry phosphoserine. The tract at residues 500–655 (EQFLRRQIAS…PSRDRKETSI (156 aa)) is mediates interaction with REPS1 and REPS2. Disordered regions lie at residues 525 to 551 (QSRQQHGRSETEEYSSESESESEDEEE) and 601 to 655 (AEQQ…ETSI). Residues 536–551 (EEYSSESESESEDEEE) are compositionally biased toward acidic residues. Basic and acidic residues predominate over residues 624-655 (GVLEPKAAKEQPKAGKEPAKPSPSRDRKETSI). Residue serine 645 is modified to Phosphoserine.

Interacts with the GTP-bound form of RALA (via effector domain); during mitosis, recruits RALBP1 to the mitochondrion where it promotes DNM1L phosphorylation and mitochondrial fission. Interacts with DNM1L; mediates its mitotic kinase cyclin B-CDK1-mediated phosphorylation during mitosis to promote mitochondrial fission. Interacts with the mitotic kinase cyclin B-CDK1 during mitosis. Interacts with the GTP-bound form of RALB (via effector domain). Interacts with REPS1; the interaction is direct and does not affect RALA-binding nor GTPase activator activity of RALBP1. Interacts with REPS2; the interaction is direct and does not affect RALA-binding nor GTPase activator activity of RALBP1. Interacts with EPN1, NUMB and TFAP2A during interphase and mitosis. Interacts with AP2M1; as part of the AP2 complex. Interacts with CDC42. Interacts with RAC1. Tyrosine-phosphorylated upon stimulation of cells with EGF. Post-translationally, may undergo proteolytic cleavage to give peptides which reassemble to form a transporter complex. In terms of tissue distribution, expressed ubiquitously but at low levels. Shows a strong expression in the erythrocytes.

The protein resides in the cell membrane. It is found in the cytoplasm. Its subcellular location is the cytosol. It localises to the cytoskeleton. The protein localises to the spindle pole. The protein resides in the nucleus. It is found in the mitochondrion. The catalysed reaction is an S-substituted glutathione(in) + ATP + H2O = an S-substituted glutathione(out) + ADP + phosphate + H(+). The enzyme catalyses ATP + H2O + xenobioticSide 1 = ADP + phosphate + xenobioticSide 2.. It carries out the reaction leukotriene C4(in) + ATP + H2O = leukotriene C4(out) + ADP + phosphate + H(+). Its function is as follows. Multifunctional protein that functions as a downstream effector of RALA and RALB. As a GTPase-activating protein/GAP can inactivate CDC42 and RAC1 by stimulating their GTPase activity. As part of the Ral signaling pathway, may also regulate ligand-dependent EGF and insulin receptors-mediated endocytosis. During mitosis, may act as a scaffold protein in the phosphorylation of EPSIN/EPN1 by the mitotic kinase cyclin B-CDK1, preventing endocytosis during that phase of the cell cycle. During mitosis, also controls mitochondrial fission as an effector of RALA. Recruited to mitochondrion by RALA, acts as a scaffold to foster the mitotic kinase cyclin B-CDK1-mediated phosphorylation and activation of DNM1L. Could also function as a primary ATP-dependent active transporter for glutathione conjugates of electrophiles. May also actively catalyze the efflux of a wide range of substrates including xenobiotics like doxorubicin (DOX) contributing to cell multidrug resistance. This Homo sapiens (Human) protein is RalA-binding protein 1.